A 406-amino-acid chain; its full sequence is Argininosuccinate synthase (406 aa).

ATP is bound by residues 10–18 (AYSGGLDTS) and alanine 37. L-citrulline is bound by residues tyrosine 88 and serine 93. Residue glycine 118 participates in ATP binding. Threonine 120, asparagine 124, and aspartate 125 together coordinate L-aspartate. Residue asparagine 124 coordinates L-citrulline. Positions 128, 179, 188, 264, and 276 each coordinate L-citrulline.

The protein belongs to the argininosuccinate synthase family. Type 1 subfamily. Homotetramer.

The protein localises to the cytoplasm. The enzyme catalyses L-citrulline + L-aspartate + ATP = 2-(N(omega)-L-arginino)succinate + AMP + diphosphate + H(+). The protein operates within amino-acid biosynthesis; L-arginine biosynthesis; L-arginine from L-ornithine and carbamoyl phosphate: step 2/3. The protein is Argininosuccinate synthase of Dinoroseobacter shibae (strain DSM 16493 / NCIMB 14021 / DFL 12).